Reading from the N-terminus, the 497-residue chain is Acetyltransferase adrJ (497 aa).

Catalysis depends on proton acceptor residues His174 and Asp422. Positions 430 to 451 (SSAQSSSQNTQKKGKPSYVNGV) are disordered.

Belongs to the plant acyltransferase family. Monomer.

Its pathway is secondary metabolite biosynthesis; terpenoid biosynthesis. In terms of biological role, acetyltransferase; part of the gene cluster that mediates the biosynthesis of andrastins, meroterpenoid compounds that exhibit inhibitory activity against ras farnesyltransferase, suggesting that they could be promising leads for antitumor agents. The first step of the pathway is the synthesis of 3,5-dimethylorsellinic acid (DMOA) by the polyketide synthase adrD via condensation of one acetyl-CoA starter unit with 3 malonyl-CoA units and 2 methylations. DMAO is then converted to farnesyl-DMAO by the prenyltransferase adrG. The methyltransferase adrK catalyzes the methylation of the carboxyl group of farnesyl-DMAO to farnesyl-DMAO methyl ester which is further converted to epoxyfarnesyl-DMAO methyl ester by the FAD-dependent monooxygenase adrH. The terpene cyclase adrI then catalyzes the carbon skeletal rearrangement to generate the andrastin E, the first compound in the pathway having the andrastin scaffold, with the tetracyclic ring system. The post-cyclization tailoring enzymes adrF, adrE, adrJ, and adrA, are involved in the conversion of andrastin E into andrastin A. The short chain dehydrogenase adrF is responsible for the oxidation of the C-3 a hydroxyl group of andrastin E to yield the corresponding ketone, andrastin D. The ketoreductase adrE stereoselectively reduces the carbonyl moiety to reverse the stereochemistry of the C-3 position to yield andrastin F. The acetyltransferase adrJ is the acetyltransferase that attaches the acetyl group to the C-3 hydroxyl group of andrastin F to yield andrastin C. Finally, the cytochrome P450 monooxygenase adrA catalyzes two sequential oxidation reactions of the C-23 methyl group, to generate the corresponding alcohol andrastin B, and aldehyde andrastin A. In Penicillium rubens (strain ATCC 28089 / DSM 1075 / NRRL 1951 / Wisconsin 54-1255) (Penicillium chrysogenum), this protein is Acetyltransferase adrJ.